The sequence spans 94 residues: (2R)-sulfolactate sulfo-lyase subunit alpha (94 aa).

One can recognise an AFP-like domain in the interval 16 to 90 (VVVVEGVEAG…GEHVHVHNVK (75 aa)).

In terms of assembly, (2R)-sulfolactate sulfo-lyase is composed of a SuyA and a SuyB subunit.

Its subcellular location is the cytoplasm. It carries out the reaction (2R)-3-sulfolactate = sulfite + pyruvate + H(+). Its function is as follows. Together with SuyB, desulfonates sulfolactate to pyruvate and sulfite. This chain is (2R)-sulfolactate sulfo-lyase subunit alpha (suyA), found in Chromohalobacter salexigens (strain ATCC BAA-138 / DSM 3043 / CIP 106854 / NCIMB 13768 / 1H11).